Here is a 360-residue protein sequence, read N- to C-terminus: MYRRVIKPALFRLDAEDAHHLTVNALALMSRLPGWPAAARRLSAPADSRLMQTLWGHTYASPVGLAAGLDKNGVAVPAFSALGFGFVEVGTVTPQPQPGNDRPRLFRLPPDEALINRMGFNNAGAAALRGQLSRLGRRTVPVWVNIGKNKLTEEAAQDYVACVQELYDVADAFVVNVSSPNTPGLRALQASAELEALLRAVLNETEAQRLRTARRAPPVLVKLAPDLHPADFEASVQGALNAGVQGLIVSNTTLSRDGLTHAHREQAGGLSGRPLTGRSTALVQDAYRLTRGAVPVVGVGGIFSADDAYAKIRAGASLVEVYSSLIYEGPGLPARIHRGLGQLLERDGISHVRDAVGADA.

FMN-binding positions include 67–71 (AGLDK) and threonine 91. Lysine 71 contacts substrate. Residue 116 to 120 (NRMGF) participates in substrate binding. Residues asparagine 145 and asparagine 176 each contribute to the FMN site. A substrate-binding site is contributed by asparagine 176. The active-site Nucleophile is the serine 179. Substrate is bound at residue asparagine 181. FMN contacts are provided by lysine 222 and serine 250. A substrate-binding site is contributed by 251–252 (NT). FMN-binding positions include glycine 272, glycine 301, and 322–323 (YS).

Belongs to the dihydroorotate dehydrogenase family. Type 2 subfamily. Monomer. FMN is required as a cofactor.

The protein resides in the cell membrane. It catalyses the reaction (S)-dihydroorotate + a quinone = orotate + a quinol. It participates in pyrimidine metabolism; UMP biosynthesis via de novo pathway; orotate from (S)-dihydroorotate (quinone route): step 1/1. Catalyzes the conversion of dihydroorotate to orotate with quinone as electron acceptor. This Deinococcus deserti (strain DSM 17065 / CIP 109153 / LMG 22923 / VCD115) protein is Dihydroorotate dehydrogenase (quinone).